We begin with the raw amino-acid sequence, 282 residues long: Probable endonuclease 4 (282 aa).

Zn(2+)-binding residues include His-66, His-106, Glu-143, Asp-177, His-180, His-214, Asp-227, His-229, and Glu-259.

It belongs to the AP endonuclease 2 family. It depends on Zn(2+) as a cofactor.

It carries out the reaction Endonucleolytic cleavage to 5'-phosphooligonucleotide end-products.. Endonuclease IV plays a role in DNA repair. It cleaves phosphodiester bonds at apurinic or apyrimidinic (AP) sites, generating a 3'-hydroxyl group and a 5'-terminal sugar phosphate. In Nitratidesulfovibrio vulgaris (strain ATCC 29579 / DSM 644 / CCUG 34227 / NCIMB 8303 / VKM B-1760 / Hildenborough) (Desulfovibrio vulgaris), this protein is Probable endonuclease 4.